The chain runs to 208 residues: Protein GrpE (208 aa).

Residues 1–27 (MERMNQSRKVPIHDAAEESSAEAHETQ) are compositionally biased toward basic and acidic residues. The tract at residues 1–65 (MERMNQSRKV…AEEAQEEEAA (65 aa)) is disordered. The segment covering 45-64 (MAEEAVEQAQDAEEAQEEEA) has biased composition (acidic residues).

The protein belongs to the GrpE family. Homodimer.

It localises to the cytoplasm. Its function is as follows. Participates actively in the response to hyperosmotic and heat shock by preventing the aggregation of stress-denatured proteins, in association with DnaK and GrpE. It is the nucleotide exchange factor for DnaK and may function as a thermosensor. Unfolded proteins bind initially to DnaJ; upon interaction with the DnaJ-bound protein, DnaK hydrolyzes its bound ATP, resulting in the formation of a stable complex. GrpE releases ADP from DnaK; ATP binding to DnaK triggers the release of the substrate protein, thus completing the reaction cycle. Several rounds of ATP-dependent interactions between DnaJ, DnaK and GrpE are required for fully efficient folding. This chain is Protein GrpE, found in Desulfatibacillum aliphaticivorans.